The sequence spans 688 residues: MSRKQFTLFDPVLLKPALWSAVLKLDPRAQWHNPVMMVVWCCCVLLTIVCGVQFAGDSSSEAVFSLGVTAWLWFTLLFANLAEALAEGRSKAQAASLKGLKKTVVAHKLAAAEHDAVSQPVPADSLRKGDYVLVSAGEVIPYDGEVIEGVASVDESAITGESAPVIRESGGDFSAVTGGTRVLSDWLVIGCTVNPGETFLDRMISMVEGAKRRKTPNEIALSILLVALTLVFLLAVVTLMPFSQYSVNSMGHGEPISVTVLVALLVCLIPTTIGGLLSAIGVAGMSRMLAANVIATSGRAVEAAGDIDVLLLDKTGTITLGNRQAAAFLPAPGISEQELASAAQLASLADETPEGRSIVVLAKQRFNLREHDIHALGATFVPFSAQTRMSGVNIHDRMIRKGSVDALRRHVASNQGHFPPEVEKQVEDVAKTGGTPLVVSEGACVLGVVALKDIVKGGIKERFAELRRMGIKTVMITGDNRLTAAAIAAEAGVDDFLAEATPEAKLALIRQYQAEGRLVAMTGDGTNDAPALAQADVAVAMNSGTQAAKEAGNMVDLDSNPTKLIEVVHIGKQMLMTRGSLTTFSLANDLAKYFAILPAAFITTYPQLGALNLMHLSSPQSAILSAVIFNALIIIGLIPLALRGVHYQPRSAKSLLRRNLFFYGLGGVVLPFIGIKVIDLFLTLMGWI.

A run of 4 helical transmembrane segments spans residues 35-55 (VMMV…VQFA), 62-82 (AVFS…ANLA), 219-239 (IALS…VVTL), and 260-280 (VLVA…LSAI). D313 functions as the 4-aspartylphosphate intermediate in the catalytic mechanism. Residues D350, E354, 383–390 (FSAQTRMS), and K401 contribute to the ATP site. 2 residues coordinate Mg(2+): D524 and D528. Helical transmembrane passes span 594–614 (FAIL…LNLM), 622–642 (AILS…PLAL), and 668–688 (VVLP…MGWI).

Belongs to the cation transport ATPase (P-type) (TC 3.A.3) family. Type IA subfamily. The system is composed of three essential subunits: KdpA, KdpB and KdpC.

The protein localises to the cell inner membrane. It catalyses the reaction K(+)(out) + ATP + H2O = K(+)(in) + ADP + phosphate + H(+). Functionally, part of the high-affinity ATP-driven potassium transport (or Kdp) system, which catalyzes the hydrolysis of ATP coupled with the electrogenic transport of potassium into the cytoplasm. This subunit is responsible for energy coupling to the transport system and for the release of the potassium ions to the cytoplasm. The chain is Potassium-transporting ATPase ATP-binding subunit from Tolumonas auensis (strain DSM 9187 / NBRC 110442 / TA 4).